The following is a 189-amino-acid chain: Phosphoheptose isomerase (189 aa).

The region spanning 34-189 (LVEAFRKGNK…CDLVEKALFA (156 aa)) is the SIS domain. 49-51 (NGG) serves as a coordination point for substrate. Histidine 58 and glutamate 62 together coordinate Zn(2+). Residues glutamate 62, 91–92 (ND), 117–119 (STS), serine 122, and glutamine 169 contribute to the substrate site. Positions 169 and 177 each coordinate Zn(2+).

The protein belongs to the SIS family. GmhA subfamily. As to quaternary structure, homotetramer. It depends on Zn(2+) as a cofactor.

The protein resides in the cytoplasm. The enzyme catalyses 2 D-sedoheptulose 7-phosphate = D-glycero-alpha-D-manno-heptose 7-phosphate + D-glycero-beta-D-manno-heptose 7-phosphate. It participates in carbohydrate biosynthesis; D-glycero-D-manno-heptose 7-phosphate biosynthesis; D-glycero-alpha-D-manno-heptose 7-phosphate and D-glycero-beta-D-manno-heptose 7-phosphate from sedoheptulose 7-phosphate: step 1/1. Its function is as follows. Catalyzes the isomerization of sedoheptulose 7-phosphate in D-glycero-D-manno-heptose 7-phosphate. The protein is Phosphoheptose isomerase of Pelobacter propionicus (strain DSM 2379 / NBRC 103807 / OttBd1).